Consider the following 566-residue polypeptide: Putative sensory transducer protein YvaQ (566 aa).

A signal peptide spans 1 to 31 (MRLTISRKFSLVFLTLILINLLVGGIGVLNM). The stretch at 74–110 (DKSKMDTLDQEMNQIMEDINQKLDNYEKTISTDKEQK) forms a coiled coil. A helical membrane pass occupies residues 186 to 206 (IYTALLVAASILISIFIWLYI). In terms of domain architecture, HAMP spans 208–261 (RNIVKPIIRMKESANHIAEGDLSNDMEALNSKDELGDLNEALQKMVGNLRDIVG). In terms of domain architecture, Methyl-accepting transducer spans 280–530 (ATNETRSGSK…ESAAGIEETF (251 aa)). Residues 536–566 (SAHSMDQVLLNAEELEQLANELNEKMGQFTI) adopt a coiled-coil conformation.

The protein belongs to the methyl-accepting chemotaxis (MCP) protein family.

The protein resides in the cell membrane. Functionally, chemotactic-signal transducers respond to changes in the concentration of attractants and repellents in the environment, transduce a signal from the outside to the inside of the cell, and facilitate sensory adaptation through the variation of the level of methylation. Attractants increase the level of methylation while repellents decrease the level of methylation. The polypeptide is Putative sensory transducer protein YvaQ (yvaQ) (Bacillus subtilis (strain 168)).